The following is a 629-amino-acid chain: tRNA uridine 5-carboxymethylaminomethyl modification enzyme MnmG (629 aa).

FAD-binding positions include 13–18, V125, and S180; that span reads GGGHAG. 273-287 is an NAD(+) binding site; sequence GPRYCPSIEDKIHRF. Q370 serves as a coordination point for FAD.

Belongs to the MnmG family. In terms of assembly, homodimer. Heterotetramer of two MnmE and two MnmG subunits. Requires FAD as cofactor.

It localises to the cytoplasm. Functionally, NAD-binding protein involved in the addition of a carboxymethylaminomethyl (cmnm) group at the wobble position (U34) of certain tRNAs, forming tRNA-cmnm(5)s(2)U34. The chain is tRNA uridine 5-carboxymethylaminomethyl modification enzyme MnmG from Shewanella sp. (strain MR-7).